The primary structure comprises 2684 residues: Probable polyketide synthase 27 (2684 aa).

The Ketosynthase family 3 (KS3) domain occupies 11–442 (CGDVAIIGIG…GSNVCLILSE (432 aa)). Active-site for beta-ketoacyl synthase activity residues include Cys183, His322, and His365. Residues 650–683 (GVSADIIVGHSLGEMSSSYSSGMIDFETLCYLIY) form an acyl/malonyl transferases region. Ser660 acts as the For acyl/malonyl transferase activity in catalysis. The interval 958 to 1087 (HEKITSEGPP…GNFSLFKHNS (130 aa)) is N-terminal hotdog fold. The PKS/mFAS DH domain maps to 958 to 1276 (HEKITSEGPP…CTSVSLVNPR (319 aa)). The active-site Proton acceptor; for dehydratase activity is His999. Residues 1104–1276 (NFTTISKQEF…CTSVSLVNPR (173 aa)) form a C-terminal hotdog fold region. Residue Asp1173 is the Proton donor; for dehydratase activity of the active site. The disordered stretch occupies residues 1202–1221 (IPSSSSSSKDDNDCDSNNNN). The region spanning 2585–2662 (SDNEFIHSTI…QSIDIIKFGY (78 aa)) is the Carrier domain. Ser2622 is modified (O-(pantetheine 4'-phosphoryl)serine).

The cofactor is pantetheine 4'-phosphate.

Functionally, probable polyketide synthase. The polypeptide is Probable polyketide synthase 27 (pks27) (Dictyostelium discoideum (Social amoeba)).